A 382-amino-acid polypeptide reads, in one-letter code: Pyrimidine monooxygenase RutA (382 aa).

FMN is bound by residues 68 to 69, asparagine 134, glutamate 143, 159 to 160, and serine 209; these read IK and RY.

The protein belongs to the NtaA/SnaA/DszA monooxygenase family. RutA subfamily.

The catalysed reaction is uracil + FMNH2 + NADH + O2 = (Z)-3-ureidoacrylate + FMN + NAD(+) + H2O + H(+). It carries out the reaction thymine + FMNH2 + NADH + O2 = (Z)-2-methylureidoacrylate + FMN + NAD(+) + H2O + H(+). In terms of biological role, catalyzes the pyrimidine ring opening between N-3 and C-4 by an unusual flavin hydroperoxide-catalyzed mechanism, adding oxygen atoms in the process to yield ureidoacrylate peracid, that immediately reacts with FMN forming ureidoacrylate and FMN-N(5)-oxide. The FMN-N(5)-oxide reacts spontaneously with NADH to produce FMN. Requires the flavin reductase RutF to regenerate FMN in vivo. The polypeptide is Pyrimidine monooxygenase RutA (Escherichia coli O8 (strain IAI1)).